The sequence spans 152 residues: Regulator of G-protein signaling 21 (152 aa).

Positions 21–137 constitute an RGS domain; the sequence is NMDTLLANQA…LKSEIYKKLV (117 aa).

In terms of tissue distribution, expressed ubiquitously.

Its function is as follows. Inhibits signal transduction by increasing the GTPase activity of G protein alpha subunits thereby driving them into their inactive GDP-bound form. This Homo sapiens (Human) protein is Regulator of G-protein signaling 21 (RGS21).